Reading from the N-terminus, the 31-residue chain is Photosystem II reaction center protein T (31 aa).

The helical transmembrane segment at 3 to 23 (SFAYILILGLAIATLFFAIAF) threads the bilayer.

It belongs to the PsbT family. As to quaternary structure, PSII is composed of 1 copy each of membrane proteins PsbA, PsbB, PsbC, PsbD, PsbE, PsbF, PsbH, PsbI, PsbJ, PsbK, PsbL, PsbM, PsbT, PsbX, PsbY, PsbZ, Psb30/Ycf12, peripheral proteins PsbO, CyanoQ (PsbQ), PsbU, PsbV and a large number of cofactors. It forms dimeric complexes.

Its subcellular location is the cellular thylakoid membrane. Functionally, found at the monomer-monomer interface of the photosystem II (PS II) dimer, plays a role in assembly and dimerization of PSII. PSII is a light-driven water plastoquinone oxidoreductase, using light energy to abstract electrons from H(2)O, generating a proton gradient subsequently used for ATP formation. The polypeptide is Photosystem II reaction center protein T (Synechococcus sp. (strain CC9311)).